Consider the following 901-residue polypeptide: Dipeptidyl-aminopeptidase B (901 aa).

Low complexity predominate over residues methionine 1–threonine 22. A disordered region spans residues methionine 1–glutamine 67. The Cytoplasmic segment spans residues methionine 1–arginine 76. A helical; Signal-anchor for type II membrane protein membrane pass occupies residues leucine 77–valine 97. At threonine 98 to asparagine 901 the chain is on the vacuolar side. Residues asparagine 334 and asparagine 625 are each glycosylated (N-linked (GlcNAc...) asparagine). The Charge relay system role is filled by serine 739. Asparagine 793 carries N-linked (GlcNAc...) asparagine glycosylation. Residues aspartate 816 and histidine 849 each act as charge relay system in the active site.

The protein belongs to the peptidase S9B family.

The protein resides in the vacuole membrane. It carries out the reaction Release of an N-terminal dipeptide, Xaa-Yaa-|-Zaa-, from a polypeptide, preferentially when Yaa is Pro, provided Zaa is neither Pro nor hydroxyproline.. In terms of biological role, type IV dipeptidyl-peptidase which removes N-terminal dipeptides sequentially from polypeptides having unsubstituted N-termini provided that the penultimate residue is proline. The sequence is that of Dipeptidyl-aminopeptidase B (dapB) from Aspergillus niger.